A 173-amino-acid chain; its full sequence is Gamma-crystallin S-2 (173 aa).

Beta/gamma crystallin 'Greek key' domains lie at 2-40 and 41-83; these read GKII…RVES and DWWV…RVPT. The interval 84-88 is connecting peptide; it reads HTQRP. Beta/gamma crystallin 'Greek key' domains lie at 89-129 and 130-172; these read YRMR…HVMG and AYWI…RRIM.

Belongs to the beta/gamma-crystallin family.

In terms of biological role, crystallins are the dominant structural components of the vertebrate eye lens. The sequence is that of Gamma-crystallin S-2 (GS-2) from Chiloscyllium indicum (Slender bamboo shark).